The primary structure comprises 335 residues: Protein-glutamate methylesterase/protein-glutamine glutaminase 3 (335 aa).

Residues 2–119 (RIGIVNDMPL…GNPQTAAAPL (118 aa)) enclose the Response regulatory domain. At Asp-53 the chain carries 4-aspartylphosphate. The CheB-type methylesterase domain maps to 144–335 (PKAGGARQRL…IAPRLAEVFD (192 aa)). Active-site residues include Ser-159, His-186, and Asp-279.

It belongs to the CheB family. Phosphorylated by CheA. Phosphorylation of the N-terminal regulatory domain activates the methylesterase activity.

The protein resides in the cytoplasm. The enzyme catalyses [protein]-L-glutamate 5-O-methyl ester + H2O = L-glutamyl-[protein] + methanol + H(+). It carries out the reaction L-glutaminyl-[protein] + H2O = L-glutamyl-[protein] + NH4(+). In terms of biological role, involved in chemotaxis. Part of a chemotaxis signal transduction system that modulates chemotaxis in response to various stimuli. Catalyzes the demethylation of specific methylglutamate residues introduced into the chemoreceptors (methyl-accepting chemotaxis proteins or MCP) by CheR. Also mediates the irreversible deamidation of specific glutamine residues to glutamic acid. In Pseudomonas aeruginosa (strain ATCC 15692 / DSM 22644 / CIP 104116 / JCM 14847 / LMG 12228 / 1C / PRS 101 / PAO1), this protein is Protein-glutamate methylesterase/protein-glutamine glutaminase 3.